A 288-amino-acid chain; its full sequence is MININNINPEKPVLIVGPTASGKTSLAIAIAQAQGRVVVNADALQVYDGWRVLTARPTPEEEDAVPHHLYGHVPFTAHYDVGQWLQDLTPFLAQNPVIVGGTGLYFRALTQGLADIPAIPPDIRAEADARSHTQRLADLHEGDPALVARIDCDNPMRVQRGWEVLRATGRPLSAWQDETPPPLLPLGNTTPLALMPDRDWLNARIAQRFDQMLNEGALDEARANLPRWSSAGGAAKAIGAPELIAHLHGTLPLAAARDAAVTATRQYAKRQRSWQRSNTQAWQSVPLP.

17 to 24 contacts ATP; that stretch reads GPTASGKT. 19-24 lines the substrate pocket; the sequence is TASGKT.

It belongs to the IPP transferase family. Monomer. Mg(2+) is required as a cofactor.

It carries out the reaction adenosine(37) in tRNA + dimethylallyl diphosphate = N(6)-dimethylallyladenosine(37) in tRNA + diphosphate. In terms of biological role, catalyzes the transfer of a dimethylallyl group onto the adenine at position 37 in tRNAs that read codons beginning with uridine, leading to the formation of N6-(dimethylallyl)adenosine (i(6)A). This Jannaschia sp. (strain CCS1) protein is tRNA dimethylallyltransferase.